The following is a 570-amino-acid chain: Eukaryotic translation initiation factor 2A (570 aa).

2 WD repeats span residues 274 to 316 and 318 to 358; these read EKKG…FDTI and GPRN…EIIS. The disordered stretch occupies residues 468 to 526; it reads PPHLRKPLGGGGSAGPPSAAAPTPGNQNQRPAQPRANGNGNAPQPFRPQQSEQERKAFQ. The segment covering 482-492 has biased composition (low complexity); the sequence is GPPSAAAPTPG. Residues 493 to 518 show a composition bias toward polar residues; that stretch reads NQNQRPAQPRANGNGNAPQPFRPQQS. Residues 519-541 are a coiled coil; that stretch reads EQERKAFQLKKKVEEIKVLKQRV.

The protein belongs to the WD repeat EIF2A family.

In terms of biological role, functions in the early steps of protein synthesis of a small number of specific mRNAs. Acts by directing the binding of methionyl-tRNAi to 40S ribosomal subunits. In contrast to the eIF-2 complex, it binds methionyl-tRNAi to 40S subunits in a codon-dependent manner, whereas the eIF-2 complex binds methionyl-tRNAi to 40S subunits in a GTP-dependent manner. This is Eukaryotic translation initiation factor 2A from Caenorhabditis elegans.